The sequence spans 209 residues: D-aminoacyl-tRNA deacylase 1 (209 aa).

Residues Gly139–Pro140 carry the Gly-cisPro motif, important for rejection of L-amino acids motif. Residues Thr142–Pro209 are disordered. Composition is skewed to basic and acidic residues over residues Gln159–Lys170 and Ser181–Ser194. Ser197, Ser204, and Ser205 each carry phosphoserine.

Belongs to the DTD family. In terms of assembly, homodimer. Interacts with CDC45 and TOPBP1. Preferentially phosphorylated in cells arrested early in S phase. Phosphorylation in the C-terminus weakens the interaction with CDC45.

It localises to the nucleus. Its subcellular location is the cytoplasm. The catalysed reaction is glycyl-tRNA(Ala) + H2O = tRNA(Ala) + glycine + H(+). The enzyme catalyses a D-aminoacyl-tRNA + H2O = a tRNA + a D-alpha-amino acid + H(+). Its function is as follows. An aminoacyl-tRNA editing enzyme that deacylates mischarged D-aminoacyl-tRNAs. Also deacylates mischarged glycyl-tRNA(Ala), protecting cells against glycine mischarging by AlaRS. Acts via tRNA-based rather than protein-based catalysis; rejects L-amino acids rather than detecting D-amino acids in the active site. By recycling D-aminoacyl-tRNA to D-amino acids and free tRNA molecules, this enzyme counteracts the toxicity associated with the formation of D-aminoacyl-tRNA entities in vivo and helps enforce protein L-homochirality. ATPase involved in DNA replication, may facilitate loading of CDC45 onto pre-replication complexes. The sequence is that of D-aminoacyl-tRNA deacylase 1 (Dtd1) from Mus musculus (Mouse).